Here is a 121-residue protein sequence, read N- to C-terminus: Small ribosomal subunit protein uS13 (121 aa).

A disordered region spans residues 93–121 (RGLPMRGQRTRTNARTRKGPRKAAQSLKK).

This sequence belongs to the universal ribosomal protein uS13 family. In terms of assembly, part of the 30S ribosomal subunit. Forms a loose heterodimer with protein S19. Forms two bridges to the 50S subunit in the 70S ribosome.

Located at the top of the head of the 30S subunit, it contacts several helices of the 16S rRNA. In the 70S ribosome it contacts the 23S rRNA (bridge B1a) and protein L5 of the 50S subunit (bridge B1b), connecting the 2 subunits; these bridges are implicated in subunit movement. Contacts the tRNAs in the A and P-sites. The protein is Small ribosomal subunit protein uS13 of Albidiferax ferrireducens (strain ATCC BAA-621 / DSM 15236 / T118) (Rhodoferax ferrireducens).